The chain runs to 191 residues: Protein hugin (191 aa).

The first 24 residues, 1 to 24 (MCGPSYCTLLLIAASCYILVCSHA), serve as a signal peptide directing secretion. A propeptide spanning residues 25–119 (KSLQGTSKLD…LTYYLLLQKL (95 aa)) is cleaved from the precursor. Residues leucine 137 and leucine 181 each carry the leucine amide modification. Positions 185–191 (AQVCGGD) are excised as a propeptide.

The protein belongs to the pyrokinin family. Expressed in a subgroup of neurosecretory cells in the subesophageal ganglion from embryonic stage 9 to larval stages.

The protein localises to the secreted. In terms of biological role, probably has a role in larval molting. The protein is Protein hugin (Hug) of Drosophila melanogaster (Fruit fly).